Reading from the N-terminus, the 406-residue chain is GTPase Obg (406 aa).

The region spanning 1 to 159 is the Obg domain; the sequence is MRFVDEAVIT…REIRLELKVL (159 aa). Positions 120–143 are disordered; the sequence is GGEGGLGNTHFKSSTNRAPRKCTT. The OBG-type G domain maps to 160 to 333; it reads ADVGLLGMPN…VVYYLMDQIE (174 aa). Residues 166–173, 191–195, 213–216, 283–286, and 314–316 contribute to the GTP site; these read GMPNAGKS, FTTMV, DIPG, NKLD, and SGL. Ser173 and Thr193 together coordinate Mg(2+). Residues 381–406 form a disordered region; sequence ESMMDDDDDFDDDEDDGDVESIYVRD. Acidic residues predominate over residues 383–399; it reads MMDDDDDFDDDEDDGDV.

Belongs to the TRAFAC class OBG-HflX-like GTPase superfamily. OBG GTPase family. As to quaternary structure, monomer. Mg(2+) is required as a cofactor.

Its subcellular location is the cytoplasm. Functionally, an essential GTPase which binds GTP, GDP and possibly (p)ppGpp with moderate affinity, with high nucleotide exchange rates and a fairly low GTP hydrolysis rate. Plays a role in control of the cell cycle, stress response, ribosome biogenesis and in those bacteria that undergo differentiation, in morphogenesis control. The protein is GTPase Obg of Acinetobacter baumannii (strain ACICU).